The primary structure comprises 255 residues: Small ribosomal subunit protein uS3c (255 aa).

A KH type-2 domain is found at 51–124; the sequence is IRESSNTSYG…NKNQNKNTGQ (74 aa). Positions 96 to 121 are disordered; it reads EKNRDKNKSNKNSALDQSVNKNQNKN. Residues 108–121 show a composition bias toward polar residues; it reads SALDQSVNKNQNKN.

It belongs to the universal ribosomal protein uS3 family. Part of the 30S ribosomal subunit.

It is found in the plastid. It localises to the chloroplast. This Chaetosphaeridium globosum (Charophycean green alga) protein is Small ribosomal subunit protein uS3c (rps3).